Here is a 238-residue protein sequence, read N- to C-terminus: Purine nucleoside phosphorylase DeoD-type (238 aa).

An a purine D-ribonucleoside-binding site is contributed by H5. Residues G21, R25, R44, and 88-91 each bind phosphate; that span reads RIGS. Residues 180-182 and 204-205 each bind a purine D-ribonucleoside; these read EME and SD. Catalysis depends on D205, which acts as the Proton donor.

It belongs to the PNP/UDP phosphorylase family. Homohexamer; trimer of homodimers.

It catalyses the reaction a purine D-ribonucleoside + phosphate = a purine nucleobase + alpha-D-ribose 1-phosphate. The enzyme catalyses a purine 2'-deoxy-D-ribonucleoside + phosphate = a purine nucleobase + 2-deoxy-alpha-D-ribose 1-phosphate. Catalyzes the reversible phosphorolytic breakdown of the N-glycosidic bond in the beta-(deoxy)ribonucleoside molecules, with the formation of the corresponding free purine bases and pentose-1-phosphate. This Xenorhabdus nematophila (strain ATCC 19061 / DSM 3370 / CCUG 14189 / LMG 1036 / NCIMB 9965 / AN6) protein is Purine nucleoside phosphorylase DeoD-type.